The following is a 171-amino-acid chain: S-ribosylhomocysteine lyase (171 aa).

The Fe cation site is built by His-54, His-58, and Cys-128.

It belongs to the LuxS family. As to quaternary structure, homodimer. The cofactor is Fe cation.

It carries out the reaction S-(5-deoxy-D-ribos-5-yl)-L-homocysteine = (S)-4,5-dihydroxypentane-2,3-dione + L-homocysteine. In terms of biological role, involved in the synthesis of autoinducer 2 (AI-2) which is secreted by bacteria and is used to communicate both the cell density and the metabolic potential of the environment. The regulation of gene expression in response to changes in cell density is called quorum sensing. Catalyzes the transformation of S-ribosylhomocysteine (RHC) to homocysteine (HC) and 4,5-dihydroxy-2,3-pentadione (DPD). The sequence is that of S-ribosylhomocysteine lyase from Salmonella agona (strain SL483).